The chain runs to 156 residues: Melatonin receptor type 1A (156 aa).

3 helical membrane passes run 19–39 (LCYV…NLQT), 62–82 (TIAL…FCYL), and 115–135 (FVVF…GLIV).

The protein belongs to the G-protein coupled receptor 1 family. At least in the brain, more precisely in the pars tuberalis and the suprachiasmatic nucleus.

Its subcellular location is the cell membrane. In terms of biological role, high affinity receptor for melatonin. Likely to mediate the reproductive and circadian actions of melatonin. The activity of this receptor is mediated by pertussis toxin sensitive G proteins that inhibit adenylate cyclase activity. Possibly involved in sleep induction, by melatonin activation of the potassium channel KCNMA1/BK and the dissociation of G-beta and G-gamma subunits, thereby decreasing synaptic transmission. This is Melatonin receptor type 1A (Mtnr1a) from Rattus norvegicus (Rat).